Consider the following 378-residue polypeptide: Putative F-box/kelch-repeat protein At3g43710 (378 aa).

The region spanning 23-69 is the F-box domain; the sequence is TFGIEMLPDDLVLSCLARVPRMYYPILSLVSKRFRSFLTSTELYQTR. Kelch repeat units lie at residues 130 to 176, 178 to 227, and 262 to 308; these read NIYV…VLDG, IYVA…GYDG, and SQCV…VPTK.

This is Putative F-box/kelch-repeat protein At3g43710 from Arabidopsis thaliana (Mouse-ear cress).